The primary structure comprises 407 residues: Multifunctional CCA protein (407 aa).

Residues G8 and R11 each contribute to the ATP site. Residues G8 and R11 each coordinate CTP. D21 and D23 together coordinate Mg(2+). ATP-binding residues include R91, R137, and R140. Positions 91, 137, and 140 each coordinate CTP. One can recognise an HD domain in the interval 228–329; the sequence is TGIHTLLVAE…VKIFNKLDVW (102 aa).

This sequence belongs to the tRNA nucleotidyltransferase/poly(A) polymerase family. Bacterial CCA-adding enzyme type 1 subfamily. As to quaternary structure, monomer. Can also form homodimers and oligomers. It depends on Mg(2+) as a cofactor. The cofactor is Ni(2+).

It carries out the reaction a tRNA precursor + 2 CTP + ATP = a tRNA with a 3' CCA end + 3 diphosphate. The catalysed reaction is a tRNA with a 3' CCA end + 2 CTP + ATP = a tRNA with a 3' CCACCA end + 3 diphosphate. Its function is as follows. Catalyzes the addition and repair of the essential 3'-terminal CCA sequence in tRNAs without using a nucleic acid template. Adds these three nucleotides in the order of C, C, and A to the tRNA nucleotide-73, using CTP and ATP as substrates and producing inorganic pyrophosphate. tRNA 3'-terminal CCA addition is required both for tRNA processing and repair. Also involved in tRNA surveillance by mediating tandem CCA addition to generate a CCACCA at the 3' terminus of unstable tRNAs. While stable tRNAs receive only 3'-terminal CCA, unstable tRNAs are marked with CCACCA and rapidly degraded. The sequence is that of Multifunctional CCA protein from Vibrio vulnificus (strain YJ016).